Consider the following 443-residue polypeptide: Chromosomal replication initiator protein DnaA (443 aa).

The tract at residues 1 to 67 (MDAWSRSLER…RELLAHFAGF (67 aa)) is domain I, interacts with DnaA modulators. Positions 67 to 105 (FSDVFLEIGSRPRPVEAQNAPVSTPSAHVSSEPQVPFAG) are domain II. The tract at residues 106–323 (NLDNHYTFAN…GALNTLTARA (218 aa)) is domain III, AAA+ region. Glycine 151, glycine 153, lysine 154, and threonine 155 together coordinate ATP. Residues 324-443 (NFTGRAITTE…WDKLIRKLSE (120 aa)) are domain IV, binds dsDNA.

It belongs to the DnaA family. Oligomerizes as a right-handed, spiral filament on DNA at oriC.

The protein resides in the cytoplasm. In terms of biological role, plays an essential role in the initiation and regulation of chromosomal replication. ATP-DnaA binds to the origin of replication (oriC) to initiate formation of the DNA replication initiation complex once per cell cycle. Binds the DnaA box (a 9 base pair repeat at the origin) and separates the double-stranded (ds)DNA. Forms a right-handed helical filament on oriC DNA; dsDNA binds to the exterior of the filament while single-stranded (ss)DNA is stabiized in the filament's interior. The ATP-DnaA-oriC complex binds and stabilizes one strand of the AT-rich DNA unwinding element (DUE), permitting loading of DNA polymerase. After initiation quickly degrades to an ADP-DnaA complex that is not apt for DNA replication. Binds acidic phospholipids. In Stenotrophomonas maltophilia (strain K279a), this protein is Chromosomal replication initiator protein DnaA.